We begin with the raw amino-acid sequence, 323 residues long: Aldo-keto reductase family 1 member C13 (323 aa).

NAD(+)-binding positions include 20-24, aspartate 50, and tyrosine 55; that span reads GFGTY. Catalysis depends on tyrosine 55, which acts as the Proton donor. A substrate-binding site is contributed by histidine 117. Residues 166-167, glutamine 190, 216-224, and 270-280 each bind NAD(+); these read SN, YGALGTQRY, and QSFKENEMREN.

It belongs to the aldo/keto reductase family.

Functionally, catalyzes the dehydrogenation of 17-beta-hydroxysteroids. May also exhibit significant activity with a variety of cyclic and alicyclic alcohols. Uses both NAD and NADP, but the activity is much greater with NAD than with NADP. In Mus musculus (Mouse), this protein is Aldo-keto reductase family 1 member C13 (Akr1c13).